The chain runs to 239 residues: Ubiquinone biosynthesis O-methyltransferase (239 aa).

Residues Arg42, Gly62, Asp83, and Met127 each coordinate S-adenosyl-L-methionine.

This sequence belongs to the methyltransferase superfamily. UbiG/COQ3 family.

It carries out the reaction a 3-demethylubiquinol + S-adenosyl-L-methionine = a ubiquinol + S-adenosyl-L-homocysteine + H(+). The catalysed reaction is a 3-(all-trans-polyprenyl)benzene-1,2-diol + S-adenosyl-L-methionine = a 2-methoxy-6-(all-trans-polyprenyl)phenol + S-adenosyl-L-homocysteine + H(+). The protein operates within cofactor biosynthesis; ubiquinone biosynthesis. Functionally, O-methyltransferase that catalyzes the 2 O-methylation steps in the ubiquinone biosynthetic pathway. The sequence is that of Ubiquinone biosynthesis O-methyltransferase from Pectobacterium carotovorum subsp. carotovorum (strain PC1).